A 543-amino-acid polypeptide reads, in one-letter code: Bifunctional riboflavin biosynthesis protein RIBA 1, chloroplastic (543 aa).

The N-terminal 56 residues, methionine 1–lysine 56, are a transit peptide targeting the chloroplast. The DHBP synthase stretch occupies residues alanine 57–lysine 328. Residues arginine 152 to glutamate 153, aspartate 157, arginine 267 to threonine 271, and glutamate 291 contribute to the D-ribulose 5-phosphate site. Residue glutamate 153 participates in Mg(2+) binding. Histidine 270 serves as a coordination point for Mg(2+). The segment at arginine 329–serine 543 is GTP cyclohydrolase II. Arginine 379–glutamate 383 provides a ligand contact to GTP. Positions 384, 395, and 397 each coordinate Zn(2+). Residues glutamine 400, glutamate 423–arginine 425, and threonine 445 contribute to the GTP site. Residue aspartate 457 is the Proton acceptor; for GTP cyclohydrolase activity of the active site. The active-site Nucleophile; for GTP cyclohydrolase activity is the arginine 459. Residues threonine 480 and lysine 485 each contribute to the GTP site.

It in the N-terminal section; belongs to the DHBP synthase family. This sequence in the C-terminal section; belongs to the GTP cyclohydrolase II family. Mg(2+) serves as cofactor. Mn(2+) is required as a cofactor. It depends on Zn(2+) as a cofactor. Expressed in leaves, shoots, roots, flowers and siliques.

Its subcellular location is the plastid. The protein localises to the chloroplast. The catalysed reaction is D-ribulose 5-phosphate = (2S)-2-hydroxy-3-oxobutyl phosphate + formate + H(+). It carries out the reaction GTP + 4 H2O = 2,5-diamino-6-hydroxy-4-(5-phosphoribosylamino)-pyrimidine + formate + 2 phosphate + 3 H(+). Its pathway is cofactor biosynthesis; riboflavin biosynthesis; 2-hydroxy-3-oxobutyl phosphate from D-ribulose 5-phosphate: step 1/1. It functions in the pathway cofactor biosynthesis; riboflavin biosynthesis; 5-amino-6-(D-ribitylamino)uracil from GTP: step 1/4. In terms of biological role, involved in riboflavin biosynthesis. Catalyzes both the conversion of D-ribulose 5-phosphate to formate and 3,4-dihydroxy-2-butanone 4-phosphate and the conversion of GTP to 2,5-diamino-6-ribosylamino-4(3H)-pyrimidinone 5'-phosphate (DARP), formate and pyrophosphate. RIBA2 and RIBA3 together are not able to complement the loss of function of RIBA1. This is Bifunctional riboflavin biosynthesis protein RIBA 1, chloroplastic (RIBA1) from Arabidopsis thaliana (Mouse-ear cress).